Here is a 267-residue protein sequence, read N- to C-terminus: MESRKTFDSIPDDLFVEIALRLSSKSIARCRCVSKLWASILYRQDFTELFITKSSARPRLLFAVLKASGLIFYSSPQSQNPSLEVDFHNHMKFHEDMNLYMCSYVSGFDPIGKQHKVLCMNKRLNKEWVHYILTLGTENLKWRKMICPLTHEPYYGRALSINGVLYYFARTSCFLVVSFNVRSEKFKFLDGKDFSNFHREFINYKGKLGVTKLECDAGDGHPRELCVWVLEDVEKQEWSQYIYSLPKIKVNRIRNDNIFAMFLPLTI.

The region spanning 4–53 (RKTFDSIPDDLFVEIALRLSSKSIARCRCVSKLWASILYRQDFTELFITK) is the F-box domain.

This Arabidopsis thaliana (Mouse-ear cress) protein is Putative F-box protein At5g38810.